A 109-amino-acid chain; its full sequence is Protein GOLVEN 5 (109 aa).

An N-terminal signal peptide occupies residues 1–24 (MTNITSSFLCLLILLLFCLSFGYS). A propeptide spanning residues 25 to 96 (LHGDKDEVLS…EEDDLVAYTA (72 aa)) is cleaved from the precursor. Residues 54–88 (KKAQVRGRSGQEFSKETTKMMMKKTTKKETNVEEE) are disordered. The residue at position 98 (Tyr98) is a Sulfotyrosine. At Pro106 the chain carries Hydroxyproline.

Belongs to the RGF family. Binds to LRR receptor-like serine/threonine-protein kinases RGI1, RGI2 and RGI3 to trigger their dimerization with SERK proteins and subsequent signaling. As to expression, expressed in root tips.

The protein localises to the secreted. Its function is as follows. Signaling peptide (root growth factor) that maintains the postembryonic root stem cell niche in a PIN2-traffic dependent manner. Root growth factor that regulates the pattern of root growth and lateral root development by modulating the length and the number of cortical cells in the root apical meristem (RAM), and the anticlinal asymmetric cell divisions in lateral root initiation cells. Influences the longitudinal growth rate in the primary root in response to phosphate ion (Pi)-deprivation. The chain is Protein GOLVEN 5 from Arabidopsis thaliana (Mouse-ear cress).